A 310-amino-acid chain; its full sequence is Ribosomal RNA large subunit methyltransferase F (310 aa).

It belongs to the methyltransferase superfamily. METTL16/RlmF family.

The protein localises to the cytoplasm. The catalysed reaction is adenosine(1618) in 23S rRNA + S-adenosyl-L-methionine = N(6)-methyladenosine(1618) in 23S rRNA + S-adenosyl-L-homocysteine + H(+). Functionally, specifically methylates the adenine in position 1618 of 23S rRNA. This is Ribosomal RNA large subunit methyltransferase F from Pseudoalteromonas translucida (strain TAC 125).